A 112-amino-acid polypeptide reads, in one-letter code: Integration host factor subunit alpha (112 aa).

Belongs to the bacterial histone-like protein family. In terms of assembly, heterodimer of an alpha and a beta chain.

This protein is one of the two subunits of integration host factor, a specific DNA-binding protein that functions in genetic recombination as well as in transcriptional and translational control. This is Integration host factor subunit alpha from Agrobacterium fabrum (strain C58 / ATCC 33970) (Agrobacterium tumefaciens (strain C58)).